Here is a 409-residue protein sequence, read N- to C-terminus: Argininosuccinate synthase (409 aa).

Residues Ala-12–Ser-20 and Ala-39 each bind ATP. Residues Tyr-90 and Ser-95 each coordinate L-citrulline. Position 120 (Gly-120) interacts with ATP. L-aspartate-binding residues include Thr-122, Asn-126, and Asp-127. Asn-126 serves as a coordination point for L-citrulline. Arg-130, Ser-181, Ser-190, Glu-266, and Tyr-278 together coordinate L-citrulline.

It belongs to the argininosuccinate synthase family. Type 1 subfamily. In terms of assembly, homotetramer.

It localises to the cytoplasm. The enzyme catalyses L-citrulline + L-aspartate + ATP = 2-(N(omega)-L-arginino)succinate + AMP + diphosphate + H(+). Its pathway is amino-acid biosynthesis; L-arginine biosynthesis; L-arginine from L-ornithine and carbamoyl phosphate: step 2/3. The sequence is that of Argininosuccinate synthase from Acidiphilium cryptum (strain JF-5).